We begin with the raw amino-acid sequence, 155 residues long: Large ribosomal subunit protein uL22 (155 aa).

The segment at His-109–Glu-155 is disordered. Positions Lys-146–Glu-155 are enriched in basic and acidic residues.

The protein belongs to the universal ribosomal protein uL22 family. In terms of assembly, part of the 50S ribosomal subunit.

Its function is as follows. This protein binds specifically to 23S rRNA; its binding is stimulated by other ribosomal proteins, e.g. L4, L17, and L20. It is important during the early stages of 50S assembly. It makes multiple contacts with different domains of the 23S rRNA in the assembled 50S subunit and ribosome. The globular domain of the protein is located near the polypeptide exit tunnel on the outside of the subunit, while an extended beta-hairpin is found that lines the wall of the exit tunnel in the center of the 70S ribosome. This chain is Large ribosomal subunit protein uL22, found in Mycolicibacterium vanbaalenii (strain DSM 7251 / JCM 13017 / BCRC 16820 / KCTC 9966 / NRRL B-24157 / PYR-1) (Mycobacterium vanbaalenii).